The chain runs to 496 residues: Xylulose kinase (496 aa).

83–84 contributes to the substrate binding site; it reads MH. Aspartate 237 serves as the catalytic Proton acceptor.

This sequence belongs to the FGGY kinase family.

It carries out the reaction D-xylulose + ATP = D-xylulose 5-phosphate + ADP + H(+). Its function is as follows. Catalyzes the phosphorylation of D-xylulose to D-xylulose 5-phosphate. In Staphylococcus epidermidis (strain ATCC 12228 / FDA PCI 1200), this protein is Xylulose kinase.